A 155-amino-acid chain; its full sequence is Endoribonuclease YbeY (155 aa).

Zn(2+) contacts are provided by histidine 116, histidine 120, and histidine 126.

This sequence belongs to the endoribonuclease YbeY family. Zn(2+) serves as cofactor.

Its subcellular location is the cytoplasm. Single strand-specific metallo-endoribonuclease involved in late-stage 70S ribosome quality control and in maturation of the 3' terminus of the 16S rRNA. The protein is Endoribonuclease YbeY of Thermobifida fusca (strain YX).